The following is a 102-amino-acid chain: Small ribosomal subunit protein bS6 (102 aa).

This sequence belongs to the bacterial ribosomal protein bS6 family.

In terms of biological role, binds together with bS18 to 16S ribosomal RNA. The polypeptide is Small ribosomal subunit protein bS6 (Desulfovibrio desulfuricans (strain ATCC 27774 / DSM 6949 / MB)).